Reading from the N-terminus, the 359-residue chain is HTH-type transcriptional regulator Rv3575c (359 aa).

The 56-residue stretch at 9 to 64 folds into the HTH lacI-type domain; it reads ATLASLAAELKVSRTTVSNAFNRPDQLSADLRERVLATAKRLGYAGPDPVARSLRT. Positions 11–30 form a DNA-binding region, H-T-H motif; the sequence is LASLAAELKVSRTTVSNAFN.

Transcriptional regulator that negatively regulates transcription of the mce4 operon, which is involved in cholesterol transport and utilization. Acts by binding to the promoter region of the mce4 operon. It affects the utilization of host cholesterol as a carbon source, impacting the host's innate immune response. The chain is HTH-type transcriptional regulator Rv3575c from Mycobacterium tuberculosis (strain ATCC 25618 / H37Rv).